Consider the following 161-residue polypeptide: Cytochrome c-type biogenesis protein CcmE (161 aa).

Over 1-8 the chain is Cytoplasmic; it reads MNPRRQKR. Residues 9–29 traverse the membrane as a helical; Signal-anchor for type II membrane protein segment; that stretch reads LGIILAILIGVSATIGLMIYA. Residues 30–161 are Periplasmic-facing; that stretch reads LNQNMDLFYT…SEEQKQGSGQ (132 aa). Positions 129 and 133 each coordinate heme.

It belongs to the CcmE/CycJ family.

The protein resides in the cell inner membrane. Heme chaperone required for the biogenesis of c-type cytochromes. Transiently binds heme delivered by CcmC and transfers the heme to apo-cytochromes in a process facilitated by CcmF and CcmH. The polypeptide is Cytochrome c-type biogenesis protein CcmE (Vibrio vulnificus (strain CMCP6)).